The primary structure comprises 208 residues: Cytidylate kinase (208 aa).

9–17 provides a ligand contact to ATP; the sequence is GPSASGKSS.

It belongs to the cytidylate kinase family. Type 1 subfamily.

The protein localises to the cytoplasm. It catalyses the reaction CMP + ATP = CDP + ADP. It carries out the reaction dCMP + ATP = dCDP + ADP. In Thermus thermophilus (strain ATCC BAA-163 / DSM 7039 / HB27), this protein is Cytidylate kinase.